The primary structure comprises 273 residues: Dermonecrotic toxin LapSicTox-alphaIB1ai (273 aa).

H5 is an active-site residue. E25 and D27 together coordinate Mg(2+). The active-site Nucleophile is H41. 2 cysteine pairs are disulfide-bonded: C45–C51 and C47–C190. A Mg(2+)-binding site is contributed by D85. An N-linked (GlcNAc...) asparagine glycan is attached at N250.

It belongs to the arthropod phospholipase D family. Class II subfamily. Mg(2+) serves as cofactor. Expressed by the venom gland.

It is found in the secreted. It carries out the reaction an N-(acyl)-sphingosylphosphocholine = an N-(acyl)-sphingosyl-1,3-cyclic phosphate + choline. The catalysed reaction is an N-(acyl)-sphingosylphosphoethanolamine = an N-(acyl)-sphingosyl-1,3-cyclic phosphate + ethanolamine. It catalyses the reaction a 1-acyl-sn-glycero-3-phosphocholine = a 1-acyl-sn-glycero-2,3-cyclic phosphate + choline. The enzyme catalyses a 1-acyl-sn-glycero-3-phosphoethanolamine = a 1-acyl-sn-glycero-2,3-cyclic phosphate + ethanolamine. Its function is as follows. Dermonecrotic toxins cleave the phosphodiester linkage between the phosphate and headgroup of certain phospholipids (sphingolipid and lysolipid substrates), forming an alcohol (often choline) and a cyclic phosphate. This toxin acts on sphingomyelin (SM). It may also act on ceramide phosphoethanolamine (CPE), lysophosphatidylcholine (LPC) and lysophosphatidylethanolamine (LPE), but not on lysophosphatidylserine (LPS), and lysophosphatidylglycerol (LPG). It acts by transphosphatidylation, releasing exclusively cyclic phosphate products as second products. Induces dermonecrosis, hemolysis, increased vascular permeability, edema, inflammatory response, and platelet aggregation. This Loxosceles apachea (Apache recluse spider) protein is Dermonecrotic toxin LapSicTox-alphaIB1ai.